We begin with the raw amino-acid sequence, 237 residues long: Cysteine-rich venom protein tigrin (237 aa).

The first 18 residues, 1-18 (MIVFILLSLAAVLRQSFG), serve as a signal peptide directing secretion. The SCP domain maps to 37–165 (VNIHNSFRRS…LYNYFYVCQY (129 aa)). Disulfide bonds link cysteine 74–cysteine 152, cysteine 91–cysteine 166, cysteine 147–cysteine 163, cysteine 185–cysteine 192, cysteine 188–cysteine 197, cysteine 201–cysteine 232, cysteine 210–cysteine 226, and cysteine 217–cysteine 230. The 32-residue stretch at 201–232 (CTHKDDYNNCNSLVSDCQSDWDKSHCPATCFC) folds into the ShKT domain.

This sequence belongs to the CRISP family. As to expression, expressed by the venom gland.

It localises to the secreted. In terms of biological role, this protein does not inhibit smooth muscle contraction elicited by high potassium levels or caffeine. This is Cysteine-rich venom protein tigrin from Rhabdophis tigrinus tigrinus (Tiger keelback snake).